The chain runs to 229 residues: Large ribosomal subunit protein uL1 (229 aa).

It belongs to the universal ribosomal protein uL1 family. Part of the 50S ribosomal subunit.

Its function is as follows. Binds directly to 23S rRNA. The L1 stalk is quite mobile in the ribosome, and is involved in E site tRNA release. Protein L1 is also a translational repressor protein, it controls the translation of the L11 operon by binding to its mRNA. This Haemophilus ducreyi (strain 35000HP / ATCC 700724) protein is Large ribosomal subunit protein uL1.